The sequence spans 1043 residues: Constitutive coactivator of PPAR-gamma-like protein 1 homolog (1043 aa).

Disordered stretches follow at residues Ser353–Ile497 and Tyr929–Glu1043. Polar residues-rich tracts occupy residues Gln362–Pro375 and Ser405–Asp419. Basic and acidic residues-rich tracts occupy residues Thr451–Lys471 and Glu951–Lys964. Positions Val801–Glu1043 are RNA binding. Over residues Glu995–Ser1010 the composition is skewed to low complexity.

The protein belongs to the constitutive coactivator of PPAR-gamma family.

Its subcellular location is the cytoplasm. The protein resides in the cell membrane. In terms of biological role, may bee involved in the oxidative stress-induced survival signaling. Binds RNA. May participate in mRNA transport in the cytoplasm. This is Constitutive coactivator of PPAR-gamma-like protein 1 homolog (fam120a) from Xenopus tropicalis (Western clawed frog).